The following is a 450-amino-acid chain: Saccharopine dehydrogenase [NADP(+), L-glutamate-forming] (450 aa).

Residues 9 to 12, 32 to 34, 54 to 55, Ile75, 97 to 98, 124 to 126, and Ser174 contribute to the NADP(+) site; these read SGFV, CRT, DV, TS, and VDP. L-saccharopine contacts are provided by residues 98 to 99 and Asp125; that span reads SY. Residues Arg223 and 244-246 each bind L-saccharopine; that span reads TLR.

This sequence belongs to the saccharopine dehydrogenase family. In terms of assembly, homodimer.

Its subcellular location is the cytoplasm. It catalyses the reaction L-saccharopine + NADP(+) + H2O = (S)-2-amino-6-oxohexanoate + L-glutamate + NADPH + H(+). Its pathway is amino-acid biosynthesis; L-lysine biosynthesis via AAA pathway; L-lysine from L-alpha-aminoadipate (fungal route): step 2/3. This chain is Saccharopine dehydrogenase [NADP(+), L-glutamate-forming], found in Schizosaccharomyces pombe (strain 972 / ATCC 24843) (Fission yeast).